An 83-amino-acid polypeptide reads, in one-letter code: NAD(P)H-quinone oxidoreductase subunit L (83 aa).

Helical transmembrane passes span 15–35 and 53–73; these read LFVLLAYGAVLGTYLIAVPLA and LGVYGLVFLFFPGMIVFAPFI.

This sequence belongs to the complex I NdhL subunit family. As to quaternary structure, NDH-1 can be composed of about 15 different subunits; different subcomplexes with different compositions have been identified which probably have different functions.

It localises to the cellular thylakoid membrane. The enzyme catalyses a plastoquinone + NADH + (n+1) H(+)(in) = a plastoquinol + NAD(+) + n H(+)(out). The catalysed reaction is a plastoquinone + NADPH + (n+1) H(+)(in) = a plastoquinol + NADP(+) + n H(+)(out). In terms of biological role, NDH-1 shuttles electrons from an unknown electron donor, via FMN and iron-sulfur (Fe-S) centers, to quinones in the respiratory and/or the photosynthetic chain. The immediate electron acceptor for the enzyme in this species is believed to be plastoquinone. Couples the redox reaction to proton translocation, and thus conserves the redox energy in a proton gradient. Cyanobacterial NDH-1 also plays a role in inorganic carbon-concentration. This chain is NAD(P)H-quinone oxidoreductase subunit L, found in Synechococcus sp. (strain CC9902).